The chain runs to 532 residues: Protein PTST homolog 2, chloroplastic (532 aa).

A chloroplast-targeting transit peptide spans 1–71 (MVSINSGPIS…KPRKKSCCSR (71 aa)). Disordered stretches follow at residues 165–201 (QLPN…SRND), 256–292 (EVDG…SETW), 314–347 (SSGL…EDVN), and 367–388 (HSLR…TAGN). The span at 173 to 183 (EMDKTLNHGDL) shows a compositional bias: basic and acidic residues. Basic and acidic residues predominate over residues 320-339 (VKKDDTKKDSGDSMNGKDRI). The stretch at 389-454 (LENLSDDWEY…ASRALRLLRT (66 aa)) forms a coiled coil.

As to quaternary structure, interacts with PTST3 and SS4. Interacts with MFP1; the interaction is essential for the initiation of starch granules biosynthesis in leaf chloroplasts, for the correct location of the process in the stromal spaces between the thylakoid membranes, and for the association of this protein with the thylakoid membranes. Interacts with PII1/MRC; the interaction is essential for the initiation of starch granules biosynthesis in leaf chloroplasts.

Its subcellular location is the plastid. It localises to the chloroplast. The protein localises to the chloroplast thylakoid membrane. In terms of biological role, involved in starch granule initiation in leaf chloroplasts. Binds and delivers suitable maltooligosaccharide substrates to starch synthase 4 (SS4). The chain is Protein PTST homolog 2, chloroplastic from Arabidopsis thaliana (Mouse-ear cress).